The chain runs to 539 residues: Tyrosine-protein kinase csk-1 (539 aa).

In terms of domain architecture, SH3 spans 43 to 110 (SPGNDVIVTR…HADCVVRING (68 aa)). The segment at 129–148 (PGAASTTSSTSSHHSTAANH) is disordered. Low complexity predominate over residues 131–146 (AASTTSSTSSHHSTAA). Positions 151 to 241 (WFHSMISREN…GLCHRLVTPI (91 aa)) constitute an SH2 domain. Residues 283–535 (IDVGDTIGHG…GQVLQRLTTI (253 aa)) enclose the Protein kinase domain. ATP contacts are provided by residues 289 to 297 (IGHGEFGDV) and lysine 310. Aspartate 403 serves as the catalytic Proton acceptor.

The protein belongs to the protein kinase superfamily. Tyr protein kinase family. CSK subfamily. The cofactor is Mg(2+). Mn(2+) serves as cofactor. Expressed predominantly in pharyngeal muscles in procorpus, metacorpus and terminal bulb. Expressed also in some neurons (ASE, ADF, AVA, AUA, RMDV and BAG) in the head region, anchor cell, vulva, cells around anus, body wall muscle and gondal distal tip cells.

The catalysed reaction is L-tyrosyl-[protein] + ATP = O-phospho-L-tyrosyl-[protein] + ADP + H(+). Its function is as follows. Non-receptor tyrosine-protein kinase which plays a role in pharynx function by regulating pumping and the orientation of pharyngeal muscle fibers, independently of src-1 and src-2. May phosphorylate and thereby negatively regulate src-1 and src-2 activities. The chain is Tyrosine-protein kinase csk-1 from Caenorhabditis elegans.